Reading from the N-terminus, the 500-residue chain is Lysine--tRNA ligase (500 aa).

Mg(2+) contacts are provided by glutamate 410 and glutamate 417.

The protein belongs to the class-II aminoacyl-tRNA synthetase family. As to quaternary structure, homodimer. Mg(2+) serves as cofactor.

Its subcellular location is the cytoplasm. It carries out the reaction tRNA(Lys) + L-lysine + ATP = L-lysyl-tRNA(Lys) + AMP + diphosphate. This chain is Lysine--tRNA ligase, found in Shewanella piezotolerans (strain WP3 / JCM 13877).